A 594-amino-acid chain; its full sequence is Probable translation initiation factor IF-2 (594 aa).

The tr-type G domain occupies 3–220 (IRSPIVSVLG…MLMGLAQQYL (218 aa)). Residues 12–19 (GHVDHGKT) form a G1 region. 12 to 19 (GHVDHGKT) is a binding site for GTP. Residues 37-41 (GITQH) are G2. Positions 76–79 (DTPG) are G3. Residues 76-80 (DTPGH) and 130-133 (NKID) contribute to the GTP site. The interval 130-133 (NKID) is G4. A G5 region spans residues 198 to 200 (SAI).

This sequence belongs to the TRAFAC class translation factor GTPase superfamily. Classic translation factor GTPase family. IF-2 subfamily.

Function in general translation initiation by promoting the binding of the formylmethionine-tRNA to ribosomes. Seems to function along with eIF-2. This Methanothermobacter thermautotrophicus (strain ATCC 29096 / DSM 1053 / JCM 10044 / NBRC 100330 / Delta H) (Methanobacterium thermoautotrophicum) protein is Probable translation initiation factor IF-2 (infB).